Reading from the N-terminus, the 136-residue chain is Protein PsiE (136 aa).

Helical transmembrane passes span 15–35 (ILQTVLNLGLLCLGLILVVFL), 55–75 (YELVEGLVVYFLYFEFIALIV), 82–102 (FHFPLRYFVYIGITAIVRLII), and 108–128 (PLDVLIYSAAILLLVITLWLC).

Belongs to the PsiE family.

The protein resides in the cell inner membrane. The polypeptide is Protein PsiE (Escherichia coli O17:K52:H18 (strain UMN026 / ExPEC)).